A 580-amino-acid polypeptide reads, in one-letter code: F-box only protein 24 (580 aa).

In terms of domain architecture, F-box spans 36-82 (PISIQLFPPELVEHIISFLPVRDLVALGQTCRYFHEVCDAEGVWRRI). One copy of the RCC1 repeat lies at 376–425 (GRIFMQGNNRYGQLGTGDKMDRGEPTQVRYLQRPITLWCGLNHSLVLSQS).

In terms of assembly, directly interacts with SKP1 and CUL1.

Functionally, substrate-recognition component of the SCF (SKP1-CUL1-F-box protein)-type E3 ubiquitin ligase complex. In Macaca fascicularis (Crab-eating macaque), this protein is F-box only protein 24 (FBXO24).